A 107-amino-acid polypeptide reads, in one-letter code: Protein TAP1 (107 aa).

The signal sequence occupies residues 1 to 23; sequence MESKRVDVLVGLMLIMAIFGVHS.

As to expression, stamen.

This chain is Protein TAP1 (TAP1), found in Antirrhinum majus (Garden snapdragon).